The following is a 477-amino-acid chain: Iroquois homeobox protein 6a (477 aa).

Residues 148-210 (GSTRRKNATR…NARRRLKKEN (63 aa)) constitute a DNA-binding region (homeobox). Disordered regions lie at residues 209–282 (ENKM…PDIP) and 303–323 (DYLD…QSTS). Basic and acidic residues predominate over residues 219–237 (KAGDDRKEDLDSKDSKDEQ). Over residues 243–253 (DLDDMEDEDCD) the composition is skewed to acidic residues. The span at 254 to 264 (KLDSDCEKSGQ) shows a compositional bias: basic and acidic residues. Positions 310 to 321 (SKPQQQQPSPQS) are enriched in low complexity.

It belongs to the TALE/IRO homeobox family.

The protein localises to the nucleus. In terms of biological role, transcription factor. Binds to the iroquois binding site (IBS) motif of target genes to regulate gene expression; functions as a transcriptional activator or repressor. In concert with irx5a, plays a role in visual performance. In Danio rerio (Zebrafish), this protein is Iroquois homeobox protein 6a.